The following is a 209-amino-acid chain: Thymidylate kinase (209 aa).

7 to 14 (GIDGAGKS) provides a ligand contact to ATP.

This sequence belongs to the thymidylate kinase family.

The enzyme catalyses dTMP + ATP = dTDP + ADP. Phosphorylation of dTMP to form dTDP in both de novo and salvage pathways of dTTP synthesis. The protein is Thymidylate kinase of Mycoplasma mobile (strain ATCC 43663 / 163K / NCTC 11711) (Mesomycoplasma mobile).